The primary structure comprises 500 residues: Probable 26S proteasome non-ATPase regulatory subunit 3 (500 aa).

The PCI domain maps to 253–432 (ARFLYYLGRI…GYMRTKESTD (180 aa)). Positions 462-484 (RYPPKSYGKELESAEERREREQQ) are disordered. Positions 468-484 (YGKELESAEERREREQQ) are enriched in basic and acidic residues.

It belongs to the proteasome subunit S3 family. In terms of assembly, the 26S proteasome is composed of a core protease, known as the 20S proteasome, capped at one or both ends by the 19S regulatory complex (RC). The RC is composed of at least 18 different subunits in two subcomplexes, the base and the lid, which form the portions proximal and distal to the 20S proteolytic core, respectively.

Its function is as follows. Acts as a regulatory subunit of the 26 proteasome which is involved in the ATP-dependent degradation of ubiquitinated proteins. The sequence is that of Probable 26S proteasome non-ATPase regulatory subunit 3 (DOXA2) from Anopheles stephensi (Indo-Pakistan malaria mosquito).